A 473-amino-acid chain; its full sequence is Flavin-dependent L-tryptophan oxidase RebO (473 aa).

An N-terminal signal peptide occupies residues 1 to 21; sequence MSRGHKKITVLGAGVAGLVAA. FAD is bound by residues 15–16, 35–36, Arg43, 61–64, Glu444, and 451–456; these read VA, EG, GAMR, and AWIDGA.

The protein belongs to the flavin monoamine oxidase family. RebO subfamily. Homodimer. Requires FAD as cofactor.

It carries out the reaction 7-chloro-L-tryptophan + O2 = 3-(7-chloroindol-3-yl)-2-iminopropanoate + H2O2. The enzyme catalyses L-tryptophan + O2 = 2-iminio-3-(indol-3-yl)propanoate + H2O2. Its function is as follows. Involved in the biosynthesis of the indolocarbazole antitumor agent rebeccamycin. It generates the imine form of 7-chloroindole 3-pyruvate (7Cl-IPA) from 7-chloro-L-tryptophan (7Cl-Trp), with concomitant two-electron reduction of O(2) to H(2)O(2). The enzyme is also active with L-tryptophan as substrate. The sequence is that of Flavin-dependent L-tryptophan oxidase RebO (rebO) from Lentzea aerocolonigenes (Lechevalieria aerocolonigenes).